Reading from the N-terminus, the 122-residue chain is Large ribosomal subunit protein bL12 (122 aa).

It belongs to the bacterial ribosomal protein bL12 family. Homodimer. Part of the ribosomal stalk of the 50S ribosomal subunit. Forms a multimeric L10(L12)X complex, where L10 forms an elongated spine to which 2 to 4 L12 dimers bind in a sequential fashion. Binds GTP-bound translation factors.

In terms of biological role, forms part of the ribosomal stalk which helps the ribosome interact with GTP-bound translation factors. Is thus essential for accurate translation. The sequence is that of Large ribosomal subunit protein bL12 from Sulfurimonas denitrificans (strain ATCC 33889 / DSM 1251) (Thiomicrospira denitrificans (strain ATCC 33889 / DSM 1251)).